The sequence spans 248 residues: Deoxyribose-phosphate aldolase (248 aa).

Asp117 acts as the Proton donor/acceptor in catalysis. Catalysis depends on Lys179, which acts as the Schiff-base intermediate with acetaldehyde. Lys208 functions as the Proton donor/acceptor in the catalytic mechanism.

The protein belongs to the DeoC/FbaB aldolase family. DeoC type 1 subfamily.

The protein localises to the cytoplasm. The enzyme catalyses 2-deoxy-D-ribose 5-phosphate = D-glyceraldehyde 3-phosphate + acetaldehyde. The protein operates within carbohydrate degradation; 2-deoxy-D-ribose 1-phosphate degradation; D-glyceraldehyde 3-phosphate and acetaldehyde from 2-deoxy-alpha-D-ribose 1-phosphate: step 2/2. Functionally, catalyzes a reversible aldol reaction between acetaldehyde and D-glyceraldehyde 3-phosphate to generate 2-deoxy-D-ribose 5-phosphate. This is Deoxyribose-phosphate aldolase from Thermotoga maritima (strain ATCC 43589 / DSM 3109 / JCM 10099 / NBRC 100826 / MSB8).